Reading from the N-terminus, the 353-residue chain is Photosystem II protein D1 (353 aa).

Residue T2 is modified to N-acetylthreonine. A Phosphothreonine modification is found at T2. Helical transmembrane passes span 29-46 (YIGWFGVLMIPTLLTATS), 118-133 (HFLLGVACYMGREWEL), and 142-156 (WIVVAYSAPVAAATA). Chlorophyll a is bound at residue H118. Residue Y126 coordinates pheophytin a. The [CaMn4O5] cluster site is built by D170 and E189. The chain crosses the membrane as a helical span at residues 197–218 (FHMLGVAGVFGGSLFSAMHGSL). H198 contacts chlorophyll a. Residues H215 and 264–265 (SF) contribute to the a quinone site. Fe cation is bound at residue H215. H272 provides a ligand contact to Fe cation. A helical transmembrane segment spans residues 274–288 (FLAAWPVVGIWFTAL). Residues H332, E333, D342, and A344 each contribute to the [CaMn4O5] cluster site. The propeptide occupies 345–353 (AVDAPSISG).

The protein belongs to the reaction center PufL/M/PsbA/D family. In terms of assembly, PSII is composed of 1 copy each of membrane proteins PsbA, PsbB, PsbC, PsbD, PsbE, PsbF, PsbH, PsbI, PsbJ, PsbK, PsbL, PsbM, PsbT, PsbX, PsbY, PsbZ, Psb30/Ycf12, at least 3 peripheral proteins of the oxygen-evolving complex and a large number of cofactors. It forms dimeric complexes. It depends on The D1/D2 heterodimer binds P680, chlorophylls that are the primary electron donor of PSII, and subsequent electron acceptors. It shares a non-heme iron and each subunit binds pheophytin, quinone, additional chlorophylls, carotenoids and lipids. D1 provides most of the ligands for the Mn4-Ca-O5 cluster of the oxygen-evolving complex (OEC). There is also a Cl(-1) ion associated with D1 and D2, which is required for oxygen evolution. The PSII complex binds additional chlorophylls, carotenoids and specific lipids. as a cofactor. Post-translationally, tyr-161 forms a radical intermediate that is referred to as redox-active TyrZ, YZ or Y-Z. C-terminally processed by CTPA; processing is essential to allow assembly of the oxygen-evolving complex and thus photosynthetic growth.

Its subcellular location is the plastid. The protein localises to the chloroplast thylakoid membrane. It carries out the reaction 2 a plastoquinone + 4 hnu + 2 H2O = 2 a plastoquinol + O2. In terms of biological role, photosystem II (PSII) is a light-driven water:plastoquinone oxidoreductase that uses light energy to abstract electrons from H(2)O, generating O(2) and a proton gradient subsequently used for ATP formation. It consists of a core antenna complex that captures photons, and an electron transfer chain that converts photonic excitation into a charge separation. The D1/D2 (PsbA/PsbD) reaction center heterodimer binds P680, the primary electron donor of PSII as well as several subsequent electron acceptors. The protein is Photosystem II protein D1 of Vicia faba (Broad bean).